The sequence spans 220 residues: Ribosomal RNA small subunit methyltransferase G (220 aa).

S-adenosyl-L-methionine contacts are provided by residues Gly82, Leu87, 105–107, 133–134, and Arg147; these read DST and VE.

This sequence belongs to the methyltransferase superfamily. RNA methyltransferase RsmG family.

It localises to the cytoplasm. Functionally, specifically methylates the N7 position of a guanine in 16S rRNA. The chain is Ribosomal RNA small subunit methyltransferase G from Chlorobium limicola (strain DSM 245 / NBRC 103803 / 6330).